The following is a 1157-amino-acid chain: Nitric oxide synthase, inducible (1157 aa).

The DINNN-motif; mediates interaction with SPSB1, SPSB2 and SPSB4 signature appears at 23 to 27; it reads DINNN. The tract at residues 29-64 is disordered; the sequence is EKLRQASSSPVTQDDPKCPSRSRHRNECSQPLAETA. Zn(2+) is bound by residues Cys110 and Cys115. Residue Cys200 coordinates heme b. Residues Gln263, Trp372, Tyr373, and Glu377 each contribute to the L-arginine site. 4 residues coordinate (6R)-L-erythro-5,6,7,8-tetrahydrobiopterin: Arg381, Ile462, Trp463, and Phe476. Tyr491 serves as a coordination point for heme b. Residues 515–535 form a calmodulin-binding region; sequence FKVLVKAVLFAAVLMHKTMAA. Residues 539-677 enclose the Flavodoxin-like domain; it reads ATILFATETG…AFRGWAVQTF (139 aa). Positions 545, 546, 547, 549, 550, 591, 592, 628, 635, 661, and 665 each coordinate FMN. The FAD-binding FR-type domain occupies 730-970; that stretch reads KYVFSMRLKS…VRSASGFQLP (241 aa). Arg750 lines the NADP(+) pocket. The FAD site is built by His772, Arg906, Tyr908, Ser909, Thr924, and Ala926. Thr929 contacts NADP(+). Positions 930, 943, 944, and 945 each coordinate FAD. Residues Thr984, Arg1017, Ser1046, Arg1047, Lys1053, Tyr1055, Gln1057, and Asp1090 each contribute to the NADP(+) site. The interval 1138 to 1157 is disordered; that stretch reads KEGAVGPPSDPRAPGAHGKS.

Belongs to the NOS family. Homodimer. Interacts with NHERF1. Interacts with GAPDH; induced by oxidatively-modified low-densitity lipoprotein (LDL(ox)). Interacts with S100A8 and S100A9 to form the iNOS-S100A8/9 transnitrosylase complex. Interacts with SPSB1, SPSB2 and SPSB4. Interacts with ELOC and CUL5 in the presence of SPSB1 or SPSB2 or SPSB4. Forms a complex with ASL, ASS1 and HSP90AA1; the complex regulates cell-autonomous L-arginine synthesis and citrulline recycling while channeling extracellular L-arginine to nitric oxide synthesis pathway. Heme b is required as a cofactor. The cofactor is FAD. It depends on FMN as a cofactor. (6R)-L-erythro-5,6,7,8-tetrahydrobiopterin serves as cofactor. In terms of processing, polyubiquitinated; mediated by SPSB1, SPSB2 and SPSB4, leading to proteasomal degradation. Detected in both stimulated and unstimulated immune cells and macrophages with little or no up-regulation following cellular stimulation with lipopolysaccharides (LPS) or concanavalin A (ConA).

The protein resides in the cytoplasm. It is found in the cytosol. The catalysed reaction is 2 L-arginine + 3 NADPH + 4 O2 + H(+) = 2 L-citrulline + 2 nitric oxide + 3 NADP(+) + 4 H2O. Its activity is regulated as follows. Not stimulated by calcium/calmodulin. In terms of biological role, produces nitric oxide (NO) which is a messenger molecule with diverse functions throughout the body. In macrophages, NO mediates tumoricidal and bactericidal actions. Also has nitrosylase activity and mediates cysteine S-nitrosylation of cytoplasmic target proteins such PTGS2/COX2. As component of the iNOS-S100A8/9 transnitrosylase complex involved in the selective inflammatory stimulus-dependent S-nitrosylation of GAPDH implicated in regulation of the GAIT complex activity and probably multiple targets including ANXA5, EZR, MSN and VIM. Involved in inflammation, enhances the synthesis of pro-inflammatory mediators such as IL6 and IL8. The protein is Nitric oxide synthase, inducible (NOS2) of Sus scrofa (Pig).